A 395-amino-acid chain; its full sequence is Acetate kinase (395 aa).

Residue asparagine 8 coordinates Mg(2+). Lysine 15 provides a ligand contact to ATP. Arginine 94 is a substrate binding site. Residue aspartate 151 is the Proton donor/acceptor of the active site. Residues 210-214, 284-286, and 329-333 each bind ATP; these read HLGNG, DMR, and GIGEN. A Mg(2+)-binding site is contributed by glutamate 382.

The protein belongs to the acetokinase family. Homodimer. Mg(2+) serves as cofactor. Mn(2+) is required as a cofactor.

The protein resides in the cytoplasm. The catalysed reaction is acetate + ATP = acetyl phosphate + ADP. It functions in the pathway metabolic intermediate biosynthesis; acetyl-CoA biosynthesis; acetyl-CoA from acetate: step 1/2. In terms of biological role, catalyzes the formation of acetyl phosphate from acetate and ATP. Can also catalyze the reverse reaction. The sequence is that of Acetate kinase from Protochlamydia amoebophila (strain UWE25).